A 122-amino-acid polypeptide reads, in one-letter code: Large ribosomal subunit protein uL14c (122 aa).

This sequence belongs to the universal ribosomal protein uL14 family. In terms of assembly, part of the 50S ribosomal subunit.

Its subcellular location is the plastid. It localises to the chloroplast. Functionally, binds to 23S rRNA. The polypeptide is Large ribosomal subunit protein uL14c (Cryptomeria japonica (Japanese cedar)).